A 199-amino-acid polypeptide reads, in one-letter code: FMN-dependent NADH:quinone oxidoreductase 2 (199 aa).

Residues Ser10, 17 to 19, and 135 to 138 each bind FMN; these read SDS and TKGG.

Belongs to the azoreductase type 1 family. In terms of assembly, homodimer. The cofactor is FMN.

The enzyme catalyses 2 a quinone + NADH + H(+) = 2 a 1,4-benzosemiquinone + NAD(+). It catalyses the reaction N,N-dimethyl-1,4-phenylenediamine + anthranilate + 2 NAD(+) = 2-(4-dimethylaminophenyl)diazenylbenzoate + 2 NADH + 2 H(+). Quinone reductase that provides resistance to thiol-specific stress caused by electrophilic quinones. Functionally, also exhibits azoreductase activity. Catalyzes the reductive cleavage of the azo bond in aromatic azo compounds to the corresponding amines. The polypeptide is FMN-dependent NADH:quinone oxidoreductase 2 (Mesoplasma florum (strain ATCC 33453 / NBRC 100688 / NCTC 11704 / L1) (Acholeplasma florum)).